Here is a 120-residue protein sequence, read N- to C-terminus: MSAVAETIQTEMPSPILFTDSAAAKVADLIAEEGNPDLKLRVFVQGGGCSGFQYGFTFDEITNEDDTTMTKNGVSLLIDAMSYQYLVGAEIDYKEDLEGAQFVIKNPNATTTCGCGSSFS.

Iron-sulfur cluster contacts are provided by Cys49, Cys113, and Cys115.

It belongs to the HesB/IscA family. As to quaternary structure, homodimer. The cofactor is iron-sulfur cluster.

Functionally, required for insertion of 4Fe-4S clusters. The sequence is that of Putative iron-sulfur cluster insertion protein ErpA from Albidiferax ferrireducens (strain ATCC BAA-621 / DSM 15236 / T118) (Rhodoferax ferrireducens).